A 154-amino-acid polypeptide reads, in one-letter code: 3-hydroxyacyl-[acyl-carrier-protein] dehydratase FabZ (154 aa).

His-54 is a catalytic residue.

It belongs to the thioester dehydratase family. FabZ subfamily.

It localises to the cytoplasm. It carries out the reaction a (3R)-hydroxyacyl-[ACP] = a (2E)-enoyl-[ACP] + H2O. Its function is as follows. Involved in unsaturated fatty acids biosynthesis. Catalyzes the dehydration of short chain beta-hydroxyacyl-ACPs and long chain saturated and unsaturated beta-hydroxyacyl-ACPs. This is 3-hydroxyacyl-[acyl-carrier-protein] dehydratase FabZ from Shewanella baltica (strain OS223).